The following is a 416-amino-acid chain: Ribosome biogenesis protein WDR12 homolog (416 aa).

The interval 7 to 89 is ubiquitin-like (UBL) domain; the sequence is VQVRFFTKQK…ESVVEIEYLE (83 aa). WD repeat units lie at residues 101–138, 140–184, 189–228, 259–297, 299–338, 344–384, and 388–416; these read VHDDWVSSVSRCKNCIITGSYDNCVQIWDDQGSCLAKV, GHTS…ASCV, GHTQSVDSISINPSATKFCSGSWDKTLKLWSAVVNPEGGD, GHTQAVSSVVWMDRTTICSAGWDHCIRLWDAESGVNKQT, TGSKVFCEIAYSALNQCLASGSADKYIRLWDHRAEDGQVV, SHQG…TPLY, and GHQDKVMCVRWSSSRHLMSGGTDNQLILY. Positions 226-245 are disordered; that stretch reads GGDEGENGSLSKKQKTTGVK.

Belongs to the WD repeat WDR12/YTM1 family.

The protein localises to the nucleus. Its subcellular location is the nucleolus. It is found in the nucleoplasm. In terms of biological role, required for maturation of ribosomal RNAs and formation of the large ribosomal subunit. This chain is Ribosome biogenesis protein WDR12 homolog, found in Nematostella vectensis (Starlet sea anemone).